The sequence spans 342 residues: MKIRENIENFERIKLNKVAKFSDESVGRERLEEPDEIRTCFMVDRDRIIHSKSFRRLKRKTQVFIRTYGDHYRTRLVHTLEVSQVARTIGVALSLNEYLIEAIALGHDLGHAAFAHIGEDVLNDFLPGGFKHNEQSVRVAKKIEKNGLGLNLTKEVLDGILNHSGFSNVSKVAGTFEGQVVRFADKIAYVNHDIDDSIRAGILKEEDLPKNIIEILGASGSERINTLVKDCVFNTIDNIDKGEPRVSLSKEIGDAFVQLRKFLFDNIYLGKYLEDERKKAEFILEKVIEYYYNNWGEMPELYRNICEEEGIHRGVTDYIAGMTDDYCTNEFNKIYIPKFVMY.

One can recognise an HD domain in the interval arginine 75–valine 190.

It belongs to the dGTPase family. Type 2 subfamily.

The chain is Deoxyguanosinetriphosphate triphosphohydrolase-like protein from Clostridium perfringens (strain SM101 / Type A).